The chain runs to 143 residues: Hexaprenyl-diphosphate synthase small subunit ((2E,6E)-farnesyl-diphosphate specific) (143 aa).

As to quaternary structure, dimer of heterodimer or heterotetramer composed of a small (Hexs-a) and large (Hexs-B) subunit.

The catalysed reaction is 3 isopentenyl diphosphate + (2E,6E)-farnesyl diphosphate = all-trans-hexaprenyl diphosphate + 3 diphosphate. In terms of biological role, catalyzes the condensation of three molecules of isopentenyl diphosphate with farnesyl diphosphate (FPP) to yield (all-E)-hexaprenyl diphosphate (HexPP; C30), the precursor of the prenyl side chain of menaquinone-6. Large subunit Hexs-B catalyzes the condensation reaction and the final product chain length is cooperatively regulated by both the Hexs-A and Hexs-B subunits using the whole size of the hydrophobic cleft as a ruler. The chain is Hexaprenyl-diphosphate synthase small subunit ((2E,6E)-farnesyl-diphosphate specific) (hexs-a) from Micrococcus luteus (Micrococcus lysodeikticus).